The primary structure comprises 101 residues: Small ribosomal subunit protein uS14 (101 aa).

A disordered region spans residues 1–20 (MAKTSAVEKNKRRRKLVANH). The segment covering 10–20 (NKRRRKLVANH) has biased composition (basic residues).

Belongs to the universal ribosomal protein uS14 family. In terms of assembly, part of the 30S ribosomal subunit. Contacts proteins S3 and S10.

Functionally, binds 16S rRNA, required for the assembly of 30S particles and may also be responsible for determining the conformation of the 16S rRNA at the A site. The sequence is that of Small ribosomal subunit protein uS14 from Sinorhizobium medicae (strain WSM419) (Ensifer medicae).